Consider the following 228-residue polypeptide: MKQGGSDAAKQAAGESAAEAVEDATVVGLGTGSTAAYAIRAIGQAVDAGLDVVGVPTSFQSRQLARDCGIPLADLDDVSVDLAIDGADEVASGNLIKGGGAAHAREKIVDASADRFLVVADPTKEAAVLSYPVPVEVLPMARSTVVTAVEELGGDPTLRRAERKDGPVVTDNGNLVLDCDFNSIHDPAALASDLAALPGVVEHGLFVGMADEIHVGTADGVTVRTLSK.

Substrate is bound by residues 31–34 (TGST), 85–88 (DGAD), and 97–100 (KGGG). The active-site Proton acceptor is the Glu-106. Lys-124 contributes to the substrate binding site.

This sequence belongs to the ribose 5-phosphate isomerase family. Homodimer.

It catalyses the reaction aldehydo-D-ribose 5-phosphate = D-ribulose 5-phosphate. Its pathway is carbohydrate degradation; pentose phosphate pathway; D-ribose 5-phosphate from D-ribulose 5-phosphate (non-oxidative stage): step 1/1. Catalyzes the reversible conversion of ribose-5-phosphate to ribulose 5-phosphate. The sequence is that of Ribose-5-phosphate isomerase A from Haloarcula marismortui (strain ATCC 43049 / DSM 3752 / JCM 8966 / VKM B-1809) (Halobacterium marismortui).